Consider the following 80-residue polypeptide: SGHHHHDSSDEPSESSKACCDHCACTKSIPPQCRCALRLNCNHCRSCICTFSIPAQCVCTDTNDFCYEPCKSGHDDDDSG.

Disulfide bonds link C19–C70, C20–C35, C23–C66, C25–C33, C41–C47, C44–C59, and C49–C57.

As to quaternary structure, occurs as a monomer, dimer or trimer. The dimer may be the active form. In terms of processing, binds calcium, probably through His-3 to His-6.

In terms of biological role, protease inhibitor with activity against cysteine, aspartic and serine proteases. Highest activity against serine proteases, in particular trypsin and trypsin-like proteases. The chain is Bowman-Birk type proteinase inhibitor from Phaseolus acutifolius (Tepary bean).